Reading from the N-terminus, the 322-residue chain is Sideroflexin-1 (322 aa).

Serine 2 bears the N-acetylserine mark. Over 2-102 the chain is Mitochondrial matrix; sequence SGEVPPNINI…MSAQVPMNMT (101 aa). Residues 103–120 traverse the membrane as a helical segment; that stretch reads ITGCMMTFYRTTPAVLFW. Residues 121 to 146 are Mitochondrial intermembrane-facing; that stretch reads QWINQSFNAVVNYTNRSGDAPLTVNE. A helical membrane pass occupies residues 147-167; the sequence is LGTAYVSATTGAVATALGLNA. Residues 168–174 lie on the Mitochondrial matrix side of the membrane; it reads LTKHVSP. A helical transmembrane segment spans residues 175 to 195; sequence LIGRFVPFAAVAAANCINIPL. Over 196–228 the chain is Mitochondrial intermembrane; it reads MRQRELKVGIPVTDENGTRLGESTNAAKQAITQ. The chain crosses the membrane as a helical span at residues 229 to 249; the sequence is VVISRILMAAPGMAIPPFIMN. At 250–266 the chain is on the mitochondrial matrix side; sequence TLEKKAFLKRFPWMSAP. The helical transmembrane segment at 267-287 threads the bilayer; sequence IQVTLVGFCLVFATPLCCALF. The Mitochondrial intermembrane portion of the chain corresponds to 288–322; sequence PQKSSMSVTSLEDDLQASIQKSHPELRRVYFNKGL.

Belongs to the sideroflexin family.

It is found in the mitochondrion inner membrane. The enzyme catalyses L-serine(in) = L-serine(out). It carries out the reaction L-alanine(in) = L-alanine(out). The catalysed reaction is L-cysteine(in) = L-cysteine(out). Its function is as follows. Amino acid transporter importing serine, an essential substrate of the mitochondrial branch of the one-carbon pathway, into mitochondria. Mitochondrial serine is then converted to glycine and formate, which exits to the cytosol where it is used to generate the charged folates that serve as one-carbon donors. May also transport other amino acids including alanine and cysteine. The chain is Sideroflexin-1 (Sfxn1) from Rattus norvegicus (Rat).